The primary structure comprises 153 residues: UPF0756 membrane protein Pjdr2_2290 (153 aa).

Helical transmembrane passes span leucine 6–alanine 26, leucine 50–valine 70, leucine 75–alanine 95, methionine 111–valine 131, and glycine 132–glycine 152.

Belongs to the UPF0756 family.

The protein resides in the cell membrane. This chain is UPF0756 membrane protein Pjdr2_2290, found in Paenibacillus sp. (strain JDR-2).